The following is a 257-amino-acid chain: tRNA pseudouridine synthase A (257 aa).

Catalysis depends on aspartate 57, which acts as the Nucleophile. Position 115 (tyrosine 115) interacts with substrate.

This sequence belongs to the tRNA pseudouridine synthase TruA family. As to quaternary structure, homodimer.

The enzyme catalyses uridine(38/39/40) in tRNA = pseudouridine(38/39/40) in tRNA. In terms of biological role, formation of pseudouridine at positions 38, 39 and 40 in the anticodon stem and loop of transfer RNAs. This is tRNA pseudouridine synthase A from Lawsonia intracellularis (strain PHE/MN1-00).